An 846-amino-acid chain; its full sequence is Protein arginine N-methyltransferase 9 (846 aa).

3 TPR repeats span residues 25 to 58 (VARS…APEL), 67 to 100 (QYTL…FPDD), and 101 to 134 (EVIC…NPDF). SAM-dependent MTase PRMT-type domains are found at residues 137 to 466 (AKEN…YLRI) and 530 to 846 (NIPY…AVKP).

The protein belongs to the class I-like SAM-binding methyltransferase superfamily. Protein arginine N-methyltransferase family. Found in a complex with PRMT9, SF3B2 and SF3B4. Interacts with SF3B2.

Its subcellular location is the cytoplasm. The enzyme catalyses L-arginyl-[protein] + 2 S-adenosyl-L-methionine = N(omega),N(omega)'-dimethyl-L-arginyl-[protein] + 2 S-adenosyl-L-homocysteine + 2 H(+). In terms of biological role, arginine methyltransferase that can both catalyze the formation of omega-N monomethylarginine (MMA) and symmetrical dimethylarginine (sDMA). Specifically mediates the symmetrical dimethylation of SF3B2. Involved in the regulation of alternative splicing of pre-mRNA. This Mus musculus (Mouse) protein is Protein arginine N-methyltransferase 9 (Prmt9).